The primary structure comprises 374 residues: Alanine racemase (374 aa).

The active-site Proton acceptor; specific for D-alanine is Lys34. Lys34 carries the post-translational modification N6-(pyridoxal phosphate)lysine. A substrate-binding site is contributed by Arg147. Tyr271 serves as the catalytic Proton acceptor; specific for L-alanine. Residue Met319 participates in substrate binding.

It belongs to the alanine racemase family. Pyridoxal 5'-phosphate serves as cofactor.

The enzyme catalyses L-alanine = D-alanine. Its pathway is amino-acid biosynthesis; D-alanine biosynthesis; D-alanine from L-alanine: step 1/1. Its function is as follows. Catalyzes the interconversion of L-alanine and D-alanine. May also act on other amino acids. The protein is Alanine racemase (alr) of Haemophilus ducreyi (strain 35000HP / ATCC 700724).